A 384-amino-acid polypeptide reads, in one-letter code: 1-deoxy-D-xylulose 5-phosphate reductoisomerase (384 aa).

NADPH contacts are provided by Thr10, Gly11, Ser12, Ile13, Lys37, and Asn124. Lys125 contacts 1-deoxy-D-xylulose 5-phosphate. Glu126 serves as a coordination point for NADPH. Mn(2+) is bound at residue Asp150. The 1-deoxy-D-xylulose 5-phosphate site is built by Ser151, Glu152, Ser176, and His199. Glu152 contributes to the Mn(2+) binding site. Gly205 serves as a coordination point for NADPH. 1-deoxy-D-xylulose 5-phosphate is bound by residues Ser212, Asn217, Lys218, and Glu221. Mn(2+) is bound at residue Glu221.

The protein belongs to the DXR family. Mg(2+) serves as cofactor. It depends on Mn(2+) as a cofactor.

It catalyses the reaction 2-C-methyl-D-erythritol 4-phosphate + NADP(+) = 1-deoxy-D-xylulose 5-phosphate + NADPH + H(+). It functions in the pathway isoprenoid biosynthesis; isopentenyl diphosphate biosynthesis via DXP pathway; isopentenyl diphosphate from 1-deoxy-D-xylulose 5-phosphate: step 1/6. Catalyzes the NADPH-dependent rearrangement and reduction of 1-deoxy-D-xylulose-5-phosphate (DXP) to 2-C-methyl-D-erythritol 4-phosphate (MEP). The chain is 1-deoxy-D-xylulose 5-phosphate reductoisomerase from Clostridium tetani (strain Massachusetts / E88).